A 493-amino-acid chain; its full sequence is UDP-N-acetylmuramoylalanine--D-glutamate ligase (493 aa).

G126–T132 serves as a coordination point for ATP.

This sequence belongs to the MurCDEF family.

Its subcellular location is the cytoplasm. It catalyses the reaction UDP-N-acetyl-alpha-D-muramoyl-L-alanine + D-glutamate + ATP = UDP-N-acetyl-alpha-D-muramoyl-L-alanyl-D-glutamate + ADP + phosphate + H(+). It participates in cell wall biogenesis; peptidoglycan biosynthesis. In terms of biological role, cell wall formation. Catalyzes the addition of glutamate to the nucleotide precursor UDP-N-acetylmuramoyl-L-alanine (UMA). This Mycolicibacterium smegmatis (strain ATCC 700084 / mc(2)155) (Mycobacterium smegmatis) protein is UDP-N-acetylmuramoylalanine--D-glutamate ligase.